The primary structure comprises 150 residues: Cytochrome c oxidase subunit 5A, mitochondrial (150 aa).

The N-terminal 41 residues, 1–41, are a transit peptide targeting the mitochondrion; sequence MLGAALRRCAVAATTWAGPRGLLHSARTPGPAAAIQSVRCY. The short motif at 2 to 17 is the SIFI-degron element; sequence LGAALRRCAVAATTWA. An N6-acetyllysine mark is found at Lys-87 and Lys-113. Thr-141 carries the phosphothreonine modification.

The protein belongs to the cytochrome c oxidase subunit 5A family. In terms of assembly, component of the cytochrome c oxidase (complex IV, CIV), a multisubunit enzyme composed of 14 subunits. The complex is composed of a catalytic core of 3 subunits MT-CO1, MT-CO2 and MT-CO3, encoded in the mitochondrial DNA, and 11 supernumerary subunits COX4I, COX5A, COX5B, COX6A, COX6B, COX6C, COX7A, COX7B, COX7C, COX8 and NDUFA4, which are encoded in the nuclear genome. The complex exists as a monomer or a dimer and forms supercomplexes (SCs) in the inner mitochondrial membrane with NADH-ubiquinone oxidoreductase (complex I, CI) and ubiquinol-cytochrome c oxidoreductase (cytochrome b-c1 complex, complex III, CIII), resulting in different assemblies (supercomplex SCI(1)III(2)IV(1) and megacomplex MCI(2)III(2)IV(2)). Interacts with AFG1L. Interacts with RAB5IF. In response to mitochondrial stress, the precursor protein is ubiquitinated by the SIFI complex in the cytoplasm before mitochondrial import, leading to its degradation. Within the SIFI complex, UBR4 initiates ubiquitin chain that are further elongated or branched by KCMF1.

The protein localises to the mitochondrion inner membrane. It participates in energy metabolism; oxidative phosphorylation. Its function is as follows. Component of the cytochrome c oxidase, the last enzyme in the mitochondrial electron transport chain which drives oxidative phosphorylation. The respiratory chain contains 3 multisubunit complexes succinate dehydrogenase (complex II, CII), ubiquinol-cytochrome c oxidoreductase (cytochrome b-c1 complex, complex III, CIII) and cytochrome c oxidase (complex IV, CIV), that cooperate to transfer electrons derived from NADH and succinate to molecular oxygen, creating an electrochemical gradient over the inner membrane that drives transmembrane transport and the ATP synthase. Cytochrome c oxidase is the component of the respiratory chain that catalyzes the reduction of oxygen to water. Electrons originating from reduced cytochrome c in the intermembrane space (IMS) are transferred via the dinuclear copper A center (CU(A)) of subunit 2 and heme A of subunit 1 to the active site in subunit 1, a binuclear center (BNC) formed by heme A3 and copper B (CU(B)). The BNC reduces molecular oxygen to 2 water molecules using 4 electrons from cytochrome c in the IMS and 4 protons from the mitochondrial matrix. In Papio anubis (Olive baboon), this protein is Cytochrome c oxidase subunit 5A, mitochondrial (COX5A).